A 24-amino-acid chain; its full sequence is MAPRGFSCLLLLTSEIDLPVKRRA.

A sufficient to interact with BID and BIM and to suppress BID and BIM activity region spans residues 1–12; sequence MAPRGFSCLLLL. Positions 3–19 are sufficient for neuroprotective activity; sequence PRGFSCLLLLTSEIDLP. The tract at residues 5–12 is sufficient to interact with MPP8; that stretch reads GFSCLLLL. 2 required for secretion regions span residues 9–11 and 19–20; these read LLL and PV.

As to quaternary structure, homodimer. Interacts with amyloid-beta protein 42 (Abeta42); the interaction prevents Abeta42 fibril formation. Interacts with BAX; forms fibers with BAX which results in BAX conformational changes and sequestering of BAX into the fibers, preventing BAX activation. Interacts with both full-length BID and cleaved BID p15; forms fibers with BID which results in BID conformational changes and sequestering of BID into the fibers, preventing BID activation. Interacts with BIM isoform BimEL but not with BIM isoforms BimL or BimS; the interaction prevents BIM-induced apoptosis. Interacts with IGFBP3; competes with importin KPNB1 for binding to IGFBP3, blocking IGFBP3 nuclear import. Interacts with TRIM11. Interacts with MPP8. In terms of tissue distribution, expressed in testis, seminal plasma and sperm (at protein level). Higher seminal plasma levels are associated with normospermia than with oligospermia, asthenospermia or oligoasthenospermia (at protein level). Higher sperm levels are associated with normospermia than with asthenospermia (at protein level). Expressed in retinal epithelial cells (at protein level). Expressed in the heart, skeletal muscle, kidney and liver. Lesser but significant expression is observed in the brain and the gastrointestinal tract. Expressed in the AD brain, where it is found in some of the large intact neurons of the occipital lobes and small and round reactive glial cells in the hippocampus.

Its subcellular location is the secreted. The protein localises to the cytoplasm. It is found in the cell projection. It localises to the cilium. The protein resides in the flagellum. Its subcellular location is the nucleus. The protein localises to the mitochondrion. Its function is as follows. Plays a role as a neuroprotective factor. Protects against neuronal cell death induced by multiple different familial Alzheimer disease genes and amyloid-beta proteins in Alzheimer disease. Mediates its neuroprotective effect by interacting with a receptor complex composed of IL6ST/GP130, IL27RA/WSX1 and CNTFR. Also acts as a ligand for G-protein coupled receptors FPR2/FPRL1 and FPR3/FPRL2. Inhibits amyloid-beta protein 40 fibril formation. Also inhibits amyloid-beta protein 42 fibril formation. Suppresses apoptosis by binding to BAX and preventing the translocation of BAX from the cytosol to mitochondria. Also suppresses apoptosis by binding to BID and inhibiting the interaction of BID with BAX and BAK which prevents oligomerization of BAX and BAK and suppresses release of apoptogenic proteins from mitochondria. Forms fibers with BAX and also with BID, inducing BAX and BID conformational changes and sequestering them into the fibers which prevents their activation. Can also suppress apoptosis by interacting with BIM isoform BimEL, inhibiting BimEL-induced activation of BAX, blocking oligomerization of BAX and BAK, and preventing release of apoptogenic proteins from mitochondria. Plays a role in up-regulation of anti-apoptotic protein BIRC6/APOLLON, leading to inhibition of neuronal cell death. Binds to IGFBP3 and specifically blocks IGFBP3-induced cell death. Competes with importin KPNB1 for binding to IGFBP3 which is likely to block IGFBP3 nuclear import. Induces chemotaxis of mononuclear phagocytes via FPR2/FPRL1. Reduces aggregation and fibrillary formation by suppressing the effect of APP on mononuclear phagocytes and acts by competitively inhibiting the access of FPR2 to APP. Protects retinal pigment epithelium (RPE) cells against oxidative stress-induced and endoplasmic reticulum (ER) stress-induced apoptosis. Promotes mitochondrial biogenesis in RPE cells following oxidative stress and promotes STAT3 phosphorylation which leads to inhibition of CASP3 release. Also reduces CASP4 levels in RPE cells, suppresses ER stress-induced mitochondrial superoxide production and plays a role in up-regulation of mitochondrial glutathione. Reduces testicular hormone deprivation-induced apoptosis of germ cells at the nonandrogen-sensitive stages of the seminiferous epithelium cycle. Protects endothelial cells against free fatty acid-induced inflammation by suppressing oxidative stress, reducing expression of TXNIP and inhibiting activation of the NLRP3 inflammasome which inhibits expression of pro-inflammatory cytokines IL1B and IL18. Protects against high glucose-induced endothelial cell dysfunction by mediating activation of ERK5 which leads to increased expression of transcription factor KLF2 and prevents monocyte adhesion to endothelial cells. Inhibits the inflammatory response in astrocytes. Increases the expression of PPARGC1A/PGC1A in pancreatic beta cells which promotes mitochondrial biogenesis. Increases insulin sensitivity. The protein is Humanin of Homo sapiens (Human).